We begin with the raw amino-acid sequence, 256 residues long: Cytochrome c-type biogenesis protein CcmE homolog, mitochondrial (256 aa).

A mitochondrion-targeting transit peptide spans 1–57 (MAARLLFRRSSQILRSIQRNPQISSSFESPPCPIFHSLTTASPDPSRLSSLTFLRSL). Residues 84–106 (LWTYALTFSCIAGFVVIVLNQFQ) traverse the membrane as a helical segment. Histidine 222 and tyrosine 226 together coordinate heme.

The protein belongs to the CcmE/CycJ family.

The protein localises to the mitochondrion inner membrane. Its subcellular location is the mitochondrion intermembrane space. Functionally, heme-binding chaperone that may be involved in cytochrome c maturation in mitochondria. The polypeptide is Cytochrome c-type biogenesis protein CcmE homolog, mitochondrial (Arabidopsis thaliana (Mouse-ear cress)).